The chain runs to 361 residues: Probable sugar phosphate/phosphate translocator At1g12500 (361 aa).

Position 2 is an N-acetylvaline (V2). The next 9 helical transmembrane spans lie at 56–76, 90–110, 125–145, 153–173, 192–212, 240–260, 276–296, 306–326, and 329–349; these read TILT…VLLL, IFLT…VINI, FLKI…GNTS, FNQA…FLIT, IVLA…ICVA, LLLY…LYIE, LIIF…LTNF, TLQV…VLIF, and PVTV…VLYS. An EamA domain is found at 89-196; sequence PIFLTMTHML…PVVSGIVLAS (108 aa).

Belongs to the TPT transporter family. TPT (TC 2.A.7.9) subfamily.

It is found in the membrane. The polypeptide is Probable sugar phosphate/phosphate translocator At1g12500 (Arabidopsis thaliana (Mouse-ear cress)).